A 938-amino-acid chain; its full sequence is Glutamate receptor ionotropic, NMDA 1 (938 aa).

Residues 1-18 (MSTMHLLTFALLFSCSFA) form the signal peptide. At 19 to 559 (RAACDPKIVN…TLDSFMQPFQ (541 aa)) the chain is on the extracellular side. 10 N-linked (GlcNAc...) asparagine glycosylation sites follow: Asn61, Asn203, Asn239, Asn276, Asn300, Asn350, Asn368, Asn440, Asn471, and Asn491. A disulfide bond links Cys79 and Cys308. 2 cysteine pairs are disulfide-bonded: Cys420-Cys454 and Cys436-Cys455. Residues Pro516, Thr518, and Arg523 each contribute to the glycine site. The chain crosses the membrane as a helical span at residues 560–580 (STLWLLVGLSVHVVAVMLYLL). Topologically, residues 581–602 (DRFSPFGRFKVNSEEEEEDALT) are cytoplasmic. Residues 603–624 (LSSAMWFSWGVLLNSGIGEGAP) constitute an intramembrane region (discontinuously helical). A pore-forming region spans residues 603–624 (LSSAMWFSWGVLLNSGIGEGAP). The Cytoplasmic portion of the chain corresponds to 625-630 (RSFSAR). A helical transmembrane segment spans residues 631–647 (ILGMVWAGFAMIIVASY). Topologically, residues 648–812 (TANLAAFLVL…NAPATLTFEN (165 aa)) are extracellular. Asn674 is a glycosylation site (N-linked (GlcNAc...) asparagine). 2 residues coordinate glycine: Ser688 and Asp732. Cys744 and Cys798 are oxidised to a cystine. N-linked (GlcNAc...) asparagine glycosylation is present at Asn771. Residues 813–833 (MAGVFMLVAGGIVAGIFLIFI) traverse the membrane as a helical segment. Residues 834–938 (EIAYKRHKDA…LQLCSRHRES (105 aa)) lie on the Cytoplasmic side of the membrane. Phosphoserine is present on Lys877. Phosphoserine; by PKC is present on residues Ser889, Ser890, Ser896, and Ser897. The segment at 889–938 (SSFKRRRSSKDTSTGGGRGALQNQKDTVLPRRAIEREEGQLQLCSRHRES) is disordered. The residue at position 898 (Lys898) is a Phosphoserine. Residues 916–927 (VLPRRAIEREEG) show a composition bias toward basic and acidic residues.

It belongs to the glutamate-gated ion channel (TC 1.A.10.1) family. NR1/GRIN1 subfamily. As to quaternary structure, heterotetramer; the NMDAR subunits are modular and harbor tiered domains that function in concert to regulate opening and closing of the cation-selective ion channel pore. Forms heterotetrameric channels composed of two GluN1/zeta subunits (GRIN1), and two identical GluN2/epsilon subunits (GRIN2A, GRIN2B, GRIN2C or GRIN2D) or GluN3 subunits (GRIN3A or GRIN3B) (in vitro). Can also form heterotetrameric channels that contain at least two GluN1 subunits and at least two different GluN2 subunits (or a combination of one GluN2 and one GluN3 subunits) (in vitro). In vivo, the subunit composition may vary in function of the expression levels of the different subunits. Found in a complex with GRIN2A or GRIN2B, GRIN3A and PPP2CB. Found in a complex with GRIN2A or GRIN2B and GRIN3B;. Interacts with SNX27 (via PDZ domain); the interaction is required for recycling to the plasma membrane when endocytosed and prevent degradation in lysosomes. Interacts with DLG4 and MPDZ. Interacts with LRFN1 and LRFN2. Interacts with MYZAP. Found in a complex with DLG4 and PRR7. Found in a complex with GRIN2B and PRR7. Interacts with PRR7; the interaction is reduced following NMDA receptor activity. Post-translationally, NMDA is probably regulated by C-terminal phosphorylation of an isoform of NR1 by PKC. Dephosphorylated on Ser-897 probably by protein phosphatase 2A (PPP2CB). Its phosphorylated state is influenced by the formation of the NMDAR-PPP2CB complex and the NMDAR channel activity. As to expression, detected throughout the brain, in brain cortex, cerebellum, thalamus and olfactory bulb.

It is found in the cell membrane. The protein resides in the postsynaptic cell membrane. The protein localises to the synaptic cell membrane. Its subcellular location is the postsynaptic density membrane. It carries out the reaction Ca(2+)(in) = Ca(2+)(out). It catalyses the reaction Na(+)(in) = Na(+)(out). The enzyme catalyses K(+)(in) = K(+)(out). Its activity is regulated as follows. NMDA glutamate receptor activity is potentiated by Zn2(+) in a dose-dependent fashion. The potentiating effect of Zn2(+) is at submicromolar concentrations and its inhibitory action is at high micromolar to millimolar concentrations. Excitatory glycine receptors are inhibited by D-serine at 100uM. Component of N-methyl-D-aspartate (NMDA) receptors (NMDARs) that function as heterotetrameric, ligand-gated cation channels with high calcium permeability and voltage-dependent block by Mg(2+). NMDARs participate in synaptic plasticity for learning and memory formation by contributing to the long-term potentiation (LTP). Channel activation requires binding of the neurotransmitter L-glutamate to the GluN2 subunit, glycine or D-serine binding to the GluN1 subunit, plus membrane depolarization to eliminate channel inhibition by Mg(2+). NMDARs mediate simultaneously the potasium efflux and the influx of calcium and sodium. Each GluN2 or GluN3 subunit confers differential attributes to channel properties, including activation, deactivation and desensitization kinetics, pH sensitivity, Ca2(+) permeability, and binding to allosteric modulators. Forms excitatory glycinergic receptor complexes with GluN3 alone which are activated by glycine binding to the GluN1 and GluN3 subunits. The protein is Glutamate receptor ionotropic, NMDA 1 of Rattus norvegicus (Rat).